Consider the following 522-residue polypeptide: Ribonuclease Y (522 aa).

A helical membrane pass occupies residues 3-23 (ELIMYILATAVVSIGVGIVAG). A KH domain is found at 212–272 (CVSIFNIESD…VRREVARLSL (61 aa)). The 94-residue stretch at 338 to 431 (LLQHSREVAK…VQVCDAISGA (94 aa)) folds into the HD domain.

Belongs to the RNase Y family.

The protein resides in the cell membrane. Functionally, endoribonuclease that initiates mRNA decay. This is Ribonuclease Y from Cytophaga hutchinsonii (strain ATCC 33406 / DSM 1761 / CIP 103989 / NBRC 15051 / NCIMB 9469 / D465).